The chain runs to 119 residues: Large ribosomal subunit protein bL12 (119 aa).

The protein belongs to the bacterial ribosomal protein bL12 family. In terms of assembly, homodimer. Part of the ribosomal stalk of the 50S ribosomal subunit. Forms a multimeric L10(L12)X complex, where L10 forms an elongated spine to which 2 to 4 L12 dimers bind in a sequential fashion. Binds GTP-bound translation factors.

In terms of biological role, forms part of the ribosomal stalk which helps the ribosome interact with GTP-bound translation factors. Is thus essential for accurate translation. The polypeptide is Large ribosomal subunit protein bL12 (Bacillus anthracis (strain A0248)).